A 96-amino-acid chain; its full sequence is Evasin P1078 (96 aa).

The N-terminal stretch at 1 to 28 is a signal peptide; it reads MAFNTITFLQWAVFVAILFNMNLHSASA. Disulfide bonds link Cys-48–Cys-67, Cys-52–Cys-69, and Cys-63–Cys-80. The N-linked (GlcNAc...) asparagine glycan is linked to Asn-51. Asn-74 carries N-linked (GlcNAc...) asparagine glycosylation.

The protein resides in the secreted. In terms of biological role, salivary chemokine-binding protein which binds to host chemokines CXCL1, CXCL2, CXCL3, CXCL5, CXCL6, CXCL11 and CXCL13. The protein is Evasin P1078 of Ixodes ricinus (Common tick).